The following is a 547-amino-acid chain: Mercuric reductase (547 aa).

The region spanning 4-67 (NSYKIPIQGM…NISAAGYQPG (64 aa)) is the HMA domain. A metal cation-binding residues include Cys-15 and Cys-18. FAD contacts are provided by Ala-97, Gly-117, and Thr-122. Cys-123 and Cys-128 are oxidised to a cystine. Lys-132, Ala-196, Asp-388, and Val-396 together coordinate FAD. The Hg(2+) site is built by Cys-544 and Cys-545.

This sequence belongs to the class-I pyridine nucleotide-disulfide oxidoreductase family. In terms of assembly, homodimer. Requires FAD as cofactor.

It catalyses the reaction Hg + NADP(+) + H(+) = Hg(2+) + NADPH. Resistance to Hg(2+) in bacteria appears to be governed by a specialized system which includes mercuric reductase. MerA protein is responsible for volatilizing mercury as Hg(0). This Staphylococcus aureus protein is Mercuric reductase (merA).